The following is a 343-amino-acid chain: Multidrug resistance protein MdtN (343 aa).

Topologically, residues 1 to 12 (MESTPKKAPRSK) are cytoplasmic. The helical; Signal-anchor for type II membrane protein transmembrane segment at 13–33 (FPALLVVALALVALVFVIWRV) threads the bilayer. The Periplasmic segment spans residues 34-343 (DSAPSTNDAY…ASAVANLEPQ (310 aa)).

This sequence belongs to the membrane fusion protein (MFP) (TC 8.A.1) family. Could be part of a tripartite efflux system composed of MdtN, MdtO and MdtP.

The protein resides in the cell inner membrane. Could be involved in resistance to puromycin, acriflavine and tetraphenylarsonium chloride. This Escherichia coli O6:H1 (strain CFT073 / ATCC 700928 / UPEC) protein is Multidrug resistance protein MdtN (mdtN).